Reading from the N-terminus, the 424-residue chain is MNPLWQQYIQILNQVVKPALGCTEPIAAAYASAVARTLLGIVPEAISVQVSDNLYKNSMGVYVPGTGKIGLAIAAAAGAIAGNAEAGLEVLAAITPEQVAQAQDLIDAGKVKVERTETEEFIYCCVTLKAGEQEALVKICGGHTLIAEKRLNGEPVFTADNAQSAATGSICDGIDISIKSIYQFAQEVPFDQIKFILKASELNGKLSDEGMAKPYGLEVGRTMKSGIAAGIIGEDLLNKIVMLTAAASDARMGGANLPAMSNLGSGNQGIAATIPVVLTAQCYNVTEEKLARALIMSHLGAIYIKSHYPPLSAFCGNTVTSAAASMAMVYIAGGSFEQSCFAIQNVISDSSGMVCDGAKASCAMKVSTSSSAAVRSFLMALNSQNVSGQGIIATDVEKTIKNIGKMILNGMSSTDITIIDIMST.

Belongs to the UPF0597 family.

In Shewanella putrefaciens (strain CN-32 / ATCC BAA-453), this protein is UPF0597 protein Sputcn32_1209.